The chain runs to 617 residues: Dihydroxy-acid dehydratase (617 aa).

Mg(2+) is bound at residue D81. Position 122 (C122) interacts with [2Fe-2S] cluster. D123 and K124 together coordinate Mg(2+). An N6-carboxylysine modification is found at K124. C197 provides a ligand contact to [2Fe-2S] cluster. A Mg(2+)-binding site is contributed by E494. S520 acts as the Proton acceptor in catalysis.

The protein belongs to the IlvD/Edd family. In terms of assembly, homodimer. It depends on [2Fe-2S] cluster as a cofactor. Mg(2+) is required as a cofactor.

The enzyme catalyses (2R)-2,3-dihydroxy-3-methylbutanoate = 3-methyl-2-oxobutanoate + H2O. The catalysed reaction is (2R,3R)-2,3-dihydroxy-3-methylpentanoate = (S)-3-methyl-2-oxopentanoate + H2O. It functions in the pathway amino-acid biosynthesis; L-isoleucine biosynthesis; L-isoleucine from 2-oxobutanoate: step 3/4. The protein operates within amino-acid biosynthesis; L-valine biosynthesis; L-valine from pyruvate: step 3/4. Functions in the biosynthesis of branched-chain amino acids. Catalyzes the dehydration of (2R,3R)-2,3-dihydroxy-3-methylpentanoate (2,3-dihydroxy-3-methylvalerate) into 2-oxo-3-methylpentanoate (2-oxo-3-methylvalerate) and of (2R)-2,3-dihydroxy-3-methylbutanoate (2,3-dihydroxyisovalerate) into 2-oxo-3-methylbutanoate (2-oxoisovalerate), the penultimate precursor to L-isoleucine and L-valine, respectively. This chain is Dihydroxy-acid dehydratase, found in Frankia casuarinae (strain DSM 45818 / CECT 9043 / HFP020203 / CcI3).